Consider the following 150-residue polypeptide: MIP18 family protein FAM96A (150 aa).

This sequence belongs to the MIP18 family.

In terms of biological role, may play a role in chromosome segregation through establishment of sister chromatid cohesion. This chain is MIP18 family protein FAM96A (fam96A), found in Dictyostelium discoideum (Social amoeba).